The primary structure comprises 126 residues: MHELSYATSVLNAILEAVEQQEALGRKVIKVNDINLEIGELTLLSVDQLQFVFEVISEDTVCKGAELKAEMVKPKIFCMDCEFEGDLDTKDELEVICPKCESRNVKLKGGKEFNIVNATIEFDDEE.

H2 serves as a coordination point for Ni(2+). 4 residues coordinate Zn(2+): C78, C81, C97, and C100.

The protein belongs to the HypA/HybF family.

Involved in the maturation of [NiFe] hydrogenases. Required for nickel insertion into the metal center of the hydrogenase. The sequence is that of Hydrogenase maturation factor HypA from Methanococcus maripaludis (strain C7 / ATCC BAA-1331).